The sequence spans 109 residues: Spermidine export protein MdtI (109 aa).

A run of 4 helical transmembrane segments spans residues 6–26 (LQHI…NIWL), 36–56 (VYGV…GQAV), 64–84 (AYAL…WIMF), and 88–108 (LNRK…IIKL).

It belongs to the drug/metabolite transporter (DMT) superfamily. Small multidrug resistance (SMR) (TC 2.A.7.1) family. MdtI subfamily. Forms a complex with MdtJ.

The protein resides in the cell inner membrane. In terms of biological role, catalyzes the excretion of spermidine. The sequence is that of Spermidine export protein MdtI (mdtI) from Cronobacter sakazakii (strain ATCC BAA-894) (Enterobacter sakazakii).